We begin with the raw amino-acid sequence, 552 residues long: Histone deacetylase 15 (552 aa).

The RanBP2-type zinc finger occupies 86 to 115 (EFVKWCCVNCTMSNPGDMVHCCICGEHKES). The segment at 149–462 (STAVGFDERM…ATAVIKVLLG (314 aa)) is histone deacetylase. Catalysis depends on His-277, which acts as the Proton donor/acceptor. Zn(2+)-binding residues include Asp-313, His-315, and Asp-404.

This sequence belongs to the histone deacetylase family. HD type 2 subfamily. As to quaternary structure, interacts with PIF3 in the dark. Interacts with HY5. Interacts with MYB96. Forms homotetramers. The cofactor is Zn(2+). In terms of tissue distribution, expressed in stems, leaves, flowers, siliques and mature seeds.

Its subcellular location is the nucleus. It localises to the cytoplasm. The enzyme catalyses N(6)-acetyl-L-lysyl-[histone] + H2O = L-lysyl-[histone] + acetate. Inhibited by trichostatin A (TSA), a well-known histone deacetylase inhibitor. Responsible for the deacetylation of lysine residues on the N-terminal part of the core histones (H2A, H2B, H3 and H4). Histone deacetylation gives a tag for epigenetic repression and plays an important role in transcriptional regulation, cell cycle progression and developmental events. Histone deacetylases act via the formation of large multiprotein complexes. Represses chlorophyll biosynthesis and photosynthesis in the dark. Is recruited by PIF3 to the promoters of chlorophyll biosynthetic and photosynthetic genes, and represses their transcription by histone deacetylation. Involved in the repression of hypocotyl cell elongation to promote photomorphogenesis. Is recruited by HY5 to the promoters of a subset of cell wall organization and auxin signaling-related genes, and represses gene expression by decreasing the levels of histone H4 acetylation in a light-dependent manner. Promotes abscisic acid (ABA) signaling. Is recruited by MYB96 to the promoters of a subset of Rho GTPase (ROP) genes, which repress ABA signaling at the early stages of signal transduction. Represses ROP expression by removing acetyl groups of histone H3 and H4 from the cognate regions, particularly in the presence of ABA. Represses the plant response to elevated ambient temperature by directly repressing warm temperature-responsive genes. The protein is Histone deacetylase 15 of Arabidopsis thaliana (Mouse-ear cress).